The chain runs to 198 residues: Acyl carrier protein phosphodiesterase (198 aa).

Belongs to the AcpH family.

It carries out the reaction holo-[ACP] + H2O = apo-[ACP] + (R)-4'-phosphopantetheine + H(+). Its function is as follows. Converts holo-ACP to apo-ACP by hydrolytic cleavage of the phosphopantetheine prosthetic group from ACP. This chain is Acyl carrier protein phosphodiesterase, found in Photorhabdus laumondii subsp. laumondii (strain DSM 15139 / CIP 105565 / TT01) (Photorhabdus luminescens subsp. laumondii).